The sequence spans 208 residues: Small ribosomal subunit protein uS4 (208 aa).

The interval 31–51 is disordered; sequence SALDKRAYGPGQHGQRRAKTS. The region spanning 98-160 is the S4 RNA-binding domain; sequence RRLDNVVYRM…TKSNSQVVRA (63 aa).

The protein belongs to the universal ribosomal protein uS4 family. In terms of assembly, part of the 30S ribosomal subunit. Contacts protein S5. The interaction surface between S4 and S5 is involved in control of translational fidelity.

Functionally, one of the primary rRNA binding proteins, it binds directly to 16S rRNA where it nucleates assembly of the body of the 30S subunit. In terms of biological role, with S5 and S12 plays an important role in translational accuracy. This chain is Small ribosomal subunit protein uS4, found in Helicobacter pylori (strain ATCC 700392 / 26695) (Campylobacter pylori).